The following is a 158-amino-acid chain: MRPRPCSILSLDVGRRRIGLAGCDALGISVTPLAALRRGRFDADLVVLQAHCCERSVQGLVVGLPLDAAGQPTAQAEHCQRYGLRLAAALDLPLAWVNEHSSTWAAGEQFGLKGDRSGRLDSAAAALLLEQWLAEGPELKPAQQTASRSGAGAGDGGS.

Residues 138 to 158 form a disordered region; the sequence is ELKPAQQTASRSGAGAGDGGS.

Belongs to the YqgF nuclease family.

It localises to the cytoplasm. Functionally, could be a nuclease involved in processing of the 5'-end of pre-16S rRNA. This is Putative pre-16S rRNA nuclease from Synechococcus sp. (strain CC9605).